A 151-amino-acid chain; its full sequence is Transcriptional repressor NrdR (151 aa).

The segment at 3 to 34 (CPYCAYGESKVVDSRSTEDGSSIRRRRECLKC) is a zinc-finger region. The ATP-cone domain occupies 49–139 (ILVIKKNMSR…VYRQFKDINT (91 aa)).

It belongs to the NrdR family. Requires Zn(2+) as cofactor.

In terms of biological role, negatively regulates transcription of bacterial ribonucleotide reductase nrd genes and operons by binding to NrdR-boxes. The chain is Transcriptional repressor NrdR from Clostridium botulinum (strain 657 / Type Ba4).